We begin with the raw amino-acid sequence, 336 residues long: Tetraacyldisaccharide 4'-kinase (336 aa).

Residue 58-65 (AVGGSGKT) coordinates ATP.

It belongs to the LpxK family.

The catalysed reaction is a lipid A disaccharide + ATP = a lipid IVA + ADP + H(+). It functions in the pathway glycolipid biosynthesis; lipid IV(A) biosynthesis; lipid IV(A) from (3R)-3-hydroxytetradecanoyl-[acyl-carrier-protein] and UDP-N-acetyl-alpha-D-glucosamine: step 6/6. Its function is as follows. Transfers the gamma-phosphate of ATP to the 4'-position of a tetraacyldisaccharide 1-phosphate intermediate (termed DS-1-P) to form tetraacyldisaccharide 1,4'-bis-phosphate (lipid IVA). In Aromatoleum aromaticum (strain DSM 19018 / LMG 30748 / EbN1) (Azoarcus sp. (strain EbN1)), this protein is Tetraacyldisaccharide 4'-kinase.